The primary structure comprises 502 residues: Protein O-glucosyltransferase 2 (502 aa).

A signal peptide spans 1 to 19; the sequence is MFGTLLLYCFFLATVPALA. The Filamin repeat unit spans residues 24–130; sequence ERQLSPEKSE…VAKSPYILKG (107 aa). Asn302 and Asn414 each carry an N-linked (GlcNAc...) asparagine glycan. The Prevents secretion from ER signature appears at 499–502; the sequence is KDEL.

This sequence belongs to the KDELC family. N-glycosylated.

It localises to the endoplasmic reticulum lumen. It carries out the reaction L-seryl-[EGF-like domain protein] + UDP-alpha-D-glucose = 3-O-(beta-D-glucosyl)-L-seryl-[EGF-like domain protein] + UDP + H(+). The catalysed reaction is L-seryl-[EGF-like domain protein] + UDP-alpha-D-xylose = 3-O-(beta-D-xylosyl)-L-seryl-[EGF-like domain protein] + UDP + H(+). Its pathway is protein modification; protein glycosylation. Protein glucosyltransferase that catalyzes the transfer of glucose from UDP-glucose to a serine residue within the consensus sequence peptide C-X-N-T-X-G-S-F-X-C. Can also catalyze the transfer of xylose from UDP-xylose but less efficiently. Specifically targets extracellular EGF repeats of proteins such as NOTCH1, NOTCH3, FBN1, FBN2 and LTBP1. May regulate the transport of NOTCH1 and NOTCH3 to the plasma membrane and thereby the Notch signaling pathway. The chain is Protein O-glucosyltransferase 2 from Homo sapiens (Human).